A 287-amino-acid chain; its full sequence is Ribosomal RNA small subunit methyltransferase I (287 aa).

Belongs to the methyltransferase superfamily. RsmI family.

It localises to the cytoplasm. The enzyme catalyses cytidine(1402) in 16S rRNA + S-adenosyl-L-methionine = 2'-O-methylcytidine(1402) in 16S rRNA + S-adenosyl-L-homocysteine + H(+). In terms of biological role, catalyzes the 2'-O-methylation of the ribose of cytidine 1402 (C1402) in 16S rRNA. The chain is Ribosomal RNA small subunit methyltransferase I from Streptococcus pyogenes serotype M3 (strain ATCC BAA-595 / MGAS315).